The sequence spans 645 residues: Putative galactocerebrosidase (645 aa).

An N-terminal signal peptide occupies residues Met1–Ala16. Substrate is bound by residues Thr87 and Trp128. N-linked (GlcNAc...) asparagine glycosylation is present at Asn141. Position 171 (Asn171) interacts with substrate. The active-site Proton donor/acceptor is the Glu172. Residues Asn174 and Asn193 are each glycosylated (N-linked (GlcNAc...) asparagine). Catalysis depends on Glu248, which acts as the Nucleophile. Cys261 and Cys365 are oxidised to a cystine. 7 N-linked (GlcNAc...) asparagine glycosylation sites follow: Asn274, Asn395, Asn411, Asn532, Asn616, Asn620, and Asn638.

It belongs to the glycosyl hydrolase 59 family.

It catalyses the reaction a beta-D-Gal-(1&lt;-&gt;1')-ceramide + H2O = an N-acyl-sphingoid base + D-galactose. The catalysed reaction is a beta-D-galactosyl-(1&lt;-&gt;1')-N-acylsphing-4-enine + H2O = an N-acylsphing-4-enine + D-galactose. Hydrolyzes the galactose ester bonds of galactosylceramide, galactosylsphingoid base, lactosylceramide, and monogalactosyldiglyceride. C.elegans contain specific sphingoid bases, which are unique or different in structure compared to the sphingoid bases found in other animals. Two examples of these distinctive compounds are: 15-methylhexadecasphinganine and 15-methylhexadecasphing-4-enine. This chain is Putative galactocerebrosidase, found in Caenorhabditis elegans.